Reading from the N-terminus, the 642-residue chain is DNA gyrase subunit B (642 aa).

A Toprim domain is found at 422 to 536; it reads CELFIVEGDS…AGYVYIAQPP (115 aa). E428, D501, and D503 together coordinate Mg(2+).

It belongs to the type II topoisomerase family. In terms of assembly, heterotetramer, composed of two GyrA and two GyrB chains. Within the heterotetramer, GyrA contains the active site tyrosine that forms a covalent intermediate with the DNA, while GyrB contributes the cofactor binding sites and catalyzes ATP hydrolysis. Requires Mg(2+) as cofactor. It depends on Mn(2+) as a cofactor. Ca(2+) serves as cofactor.

The protein localises to the cytoplasm. It carries out the reaction ATP-dependent breakage, passage and rejoining of double-stranded DNA.. Its activity is regulated as follows. Pyrrolopyrimidines inhibit both GyrB and its paralog in topoisomerase IV (parE). Its function is as follows. DNA gyrase negatively supercoils closed circular double-stranded DNA in an ATP-dependent manner and also catalyzes the interconversion of other topological isomers of double-stranded DNA rings, including catenanes and knotted rings. This Enterococcus faecalis (strain ATCC 700802 / V583) protein is DNA gyrase subunit B.